Reading from the N-terminus, the 812-residue chain is Leucine--tRNA ligase (812 aa).

The 'HIGH' region signature appears at 40-51; the sequence is SYPSGSNLHAGH. Residues 572 to 576 carry the 'KMSKS' region motif; that stretch reads KMSKS. Lys-575 contributes to the ATP binding site.

It belongs to the class-I aminoacyl-tRNA synthetase family.

Its subcellular location is the cytoplasm. The catalysed reaction is tRNA(Leu) + L-leucine + ATP = L-leucyl-tRNA(Leu) + AMP + diphosphate. In Clostridium tetani (strain Massachusetts / E88), this protein is Leucine--tRNA ligase.